The following is a 352-amino-acid chain: Ubiquitin thioesterase otulin (352 aa).

The disordered stretch occupies residues 1–49; the sequence is MSRGTMPQPGAWPGASCAETPAREAGAAARDGGKVTAGAQPRAATRCPA. Positions 18 to 30 are enriched in low complexity; sequence AETPAREAGAAAR. The stretch at 49–73 forms a coiled coil; sequence AEHEEDMYRAADEIEKEKELLIHER. The PIM motif signature appears at 52–57; the sequence is EEDMYR. Tyrosine 56 is modified (phosphotyrosine). Linear diubiquitin binding stretches follow at residues 95–96 and 124–126; these read EW and RGD. Residues 118-346 enclose the OTU domain; that stretch reads TSIRRVRGDN…DRHYNIPVRV (229 aa). Residue aspartate 126 is part of the active site. Catalysis depends on cysteine 129, which acts as the Nucleophile. 3 linear diubiquitin binding regions span residues 255–259, 283–289, and 336–338; these read FFSVL, TGGLEQV, and DDR. Residue histidine 339 is part of the active site. The short motif at 349–352 is the PDZ-binding element; it reads ETSV.

Belongs to the peptidase C65 family. Otulin subfamily. As to quaternary structure, interacts (via the PUB domain) with RNF31 (via the PIM motif); the interaction is direct. Interacts with DVL2. Post-translationally, ubiquitinated. In terms of processing, acetylated. Phosphorylated. Phosphorylation at Tyr-56 prevents interaction with RNF31; dephosphorylation promotes interaction with RNF31 and the LUBAC complex.

It localises to the cytoplasm. The enzyme catalyses Thiol-dependent hydrolysis of ester, thioester, amide, peptide and isopeptide bonds formed by the C-terminal Gly of ubiquitin (a 76-residue protein attached to proteins as an intracellular targeting signal).. Functionally, deubiquitinase that specifically removes linear ('Met-1'-linked) polyubiquitin chains to substrates and acts as a regulator of angiogenesis and innate immune response. Required during angiogenesis, craniofacial and neuronal development by regulating the canonical Wnt signaling together with the LUBAC complex. Acts as a negative regulator of NF-kappa-B by regulating the activity of the LUBAC complex. OTULIN function is mainly restricted to homeostasis of the LUBAC complex: acts by removing 'Met-1'-linked autoubiquitination of the LUBAC complex, thereby preventing inactivation of the LUBAC complex. Acts as a key negative regulator of inflammation by restricting spontaneous inflammation and maintaining immune homeostasis. In myeloid cell, required to prevent unwarranted secretion of cytokines leading to inflammation and autoimmunity by restricting linear polyubiquitin formation. Plays a role in innate immune response by restricting linear polyubiquitin formation on LUBAC complex in response to NOD2 stimulation, probably to limit NOD2-dependent pro-inflammatory signaling. This chain is Ubiquitin thioesterase otulin, found in Mus musculus (Mouse).